An 89-amino-acid chain; its full sequence is Cell division topological specificity factor (89 aa).

It belongs to the MinE family.

In terms of biological role, prevents the cell division inhibition by proteins MinC and MinD at internal division sites while permitting inhibition at polar sites. This ensures cell division at the proper site by restricting the formation of a division septum at the midpoint of the long axis of the cell. The polypeptide is Cell division topological specificity factor (Legionella pneumophila (strain Paris)).